Here is a 398-residue protein sequence, read N- to C-terminus: DNA-directed RNA polymerase III subunit RPC4 (398 aa).

A disordered region spans residues Met-1–Ala-114. Position 2 is an N-acetylserine (Ser-2). Ser-42 is modified (phosphoserine). Residues Lys-66–Pro-100 show a composition bias toward basic and acidic residues. Residues Lys-68 and Lys-78 each participate in a glycyl lysine isopeptide (Lys-Gly) (interchain with G-Cter in SUMO2) cross-link. Omega-N-methylarginine occurs at positions 95, 97, and 99. Residues Lys-141, Lys-152, Lys-160, Lys-190, Lys-199, Lys-206, Lys-220, Lys-285, Lys-302, Lys-310, and Lys-396 each participate in a glycyl lysine isopeptide (Lys-Gly) (interchain with G-Cter in SUMO2) cross-link. A disordered region spans residues Lys-220–Gly-244.

Belongs to the eukaryotic RPC4/POLR3D RNA polymerase subunit family. Component of the RNA polymerase III complex consisting of 17 subunits: a ten-subunit horseshoe-shaped catalytic core composed of POLR3A/RPC1, POLR3B/RPC2, POLR1C/RPAC1, POLR1D/RPAC2, POLR3K/RPC10, POLR2E/RPABC1, POLR2F/RPABC2, POLR2H/RPABC3, POLR2K/RPABC4 and POLR2L/RPABC5; a mobile stalk composed of two subunits POLR3H/RPC8 and CRCP/RPC9, protruding from the core and functioning primarily in transcription initiation; and additional subunits homologous to general transcription factors of the RNA polymerase II machinery, POLR3C/RPC3-POLR3F/RPC6-POLR3G/RPC7 heterotrimer required for transcription initiation and POLR3D/RPC4-POLR3E/RPC5 heterodimer involved in both transcription initiation and termination. Sumoylation on Lys-141 can serve as a signal to mark misfolded Pol III for proteasomal degradation.

The protein resides in the nucleus. In terms of biological role, DNA-dependent RNA polymerase catalyzes the transcription of DNA into RNA using the four ribonucleoside triphosphates as substrates. Specific peripheric component of RNA polymerase III (Pol III) which synthesizes small non-coding RNAs including 5S rRNA, snRNAs, tRNAs and miRNAs from at least 500 distinct genomic loci. Assembles with POLR3E/RPC5 forming a subcomplex that binds the Pol III core. Enables recruitment of Pol III at transcription initiation site and drives transcription initiation from both type 2 and type 3 DNA promoters. Required for efficient transcription termination and reinitiation. Pol III plays a key role in sensing and limiting infection by intracellular bacteria and DNA viruses. Acts as nuclear and cytosolic DNA sensor involved in innate immune response. Can sense non-self dsDNA that serves as template for transcription into dsRNA. The non-self RNA polymerase III transcripts, such as Epstein-Barr virus-encoded RNAs (EBERs) induce type I interferon and NF-kappa-B through the RIG-I pathway. This chain is DNA-directed RNA polymerase III subunit RPC4, found in Homo sapiens (Human).